Here is a 1480-residue protein sequence, read N- to C-terminus: Cystic fibrosis transmembrane conductance regulator (1480 aa).

The Cytoplasmic segment spans residues 1–77 (MQRSPLEKAS…KLINALRRCF (77 aa)). Residues 78 to 98 (FWRFMFYGIFLYLGEVTKAVQ) form a helical membrane-spanning segment. Positions 81-365 (FMFYGIFLYL…WAVQTWYDSL (285 aa)) constitute an ABC transmembrane type-1 1 domain. Over 99 to 122 (PLLLGRIIASYDPDNKEERSIAIY) the chain is Extracellular. Residues 123-146 (LGIGLCLLFIVRTLLLHPAIFGLH) form a helical membrane-spanning segment. The Cytoplasmic portion of the chain corresponds to 147–195 (HIGMQMRIAMFSLIYKKTLKLSSRVLDKISIGQLVSLLSNNLNKFDEGL). The helical transmembrane segment at 196–216 (ALAHFVWIAPLQVALLMGLIW) threads the bilayer. Topologically, residues 217–222 (ELLQAS) are extracellular. A helical membrane pass occupies residues 223 to 243 (AFCGLGFLIVLALFQAGLGRM). The Cytoplasmic portion of the chain corresponds to 244 to 298 (MMKYRDQRAGKISERLVITSEMIENIQSVKAYCWEEAMEKMIENLRQTELKLTRK). Residues 299–319 (AAYVRYFNSSAFFFSGFFVVF) form a helical membrane-spanning segment. The Extracellular portion of the chain corresponds to 320-339 (LSVLPYALIKGIILRKIFTT). Residues 340 to 358 (ISFCIVLRMAVTRQFPWAV) form a helical membrane-spanning segment. Topologically, residues 359–858 (QTWYDSLGAI…YLRYITVHKS (500 aa)) are cytoplasmic. Residues tryptophan 401, serine 434, 458–465 (GSTGAGKT), and glutamine 493 each bind ATP. Positions 423–646 (NGDDSLFFSN…QPDFSSKLMG (224 aa)) constitute an ABC transporter 1 domain. Cysteine 524 is lipidated: S-palmitoyl cysteine. The residue at position 549 (serine 549) is a Phosphoserine. A disordered R region region spans residues 654–831 (SAERRNSILT…EEINEEDLKE (178 aa)). A phosphoserine; by PKA mark is found at serine 660 and serine 670. Serine 686 is modified (phosphoserine; by PKC). A Glycyl lysine isopeptide (Lys-Gly) (interchain with G-Cter in ubiquitin) cross-link involves residue lysine 688. Phosphoserine; by PKA is present on residues serine 700 and serine 712. Residue threonine 717 is modified to Phosphothreonine. Phosphoserine; by PKA occurs at positions 737, 753, and 768. Residue serine 790 is modified to Phosphoserine; by PKC. 2 positions are modified to phosphoserine; by PKA: serine 795 and serine 813. Residues 859 to 879 (LIFVLIWCLVIFLAEVAASLV) traverse the membrane as a helical segment. The region spanning 859–1155 (LIFVLIWCLV…AVNSSIDVDS (297 aa)) is the ABC transmembrane type-1 2 domain. Residues 880-918 (VLWLLGNTPLQDKGNSTHSRNNSYAVIITSTSSYYVFYI) lie on the Extracellular side of the membrane. 2 N-linked (GlcNAc...) asparagine glycosylation sites follow: asparagine 894 and asparagine 900. A discontinuously helical transmembrane segment spans residues 919–939 (YVGVADTLLAMGFFRGLPLVH). Residues 940 to 990 (TLITVSKILHHKMLHSVLQAPMSTLNTLKAGGILNRFSKDIAILDDLLPLT) are Cytoplasmic-facing. Residues 991-1011 (IFDFIQLLLIVIGAIAVVAVL) form a helical membrane-spanning segment. The Extracellular portion of the chain corresponds to 1012 to 1013 (QP). A helical membrane pass occupies residues 1014-1034 (YIFVATVPVIVAFIMLRAYFL). At 1035–1095 (QTSQQLKQLE…TANWFLYLST (61 aa)) the chain is on the cytoplasmic side. The helical transmembrane segment at 1096–1116 (LRWFQMRIEMIFVIFFIAVTF) threads the bilayer. Topologically, residues 1117 to 1130 (ISILTTGEGEGRVG) are extracellular. The helical transmembrane segment at 1131-1151 (IILTLAMNIMSTLQWAVNSSI) threads the bilayer. Topologically, residues 1152–1480 (DVDSLMRSVS…TEEEVQDTRL (329 aa)) are cytoplasmic. Positions 1210–1443 (MTVKDLTAKY…RSLFRQAISP (234 aa)) constitute an ABC transporter 2 domain. ATP-binding positions include tyrosine 1219 and 1244–1251 (GRTGSGKS). The interaction with GORASP2 stretch occupies residues 1386–1480 (RTLKQAFADC…TEEEVQDTRL (95 aa)). Cysteine 1395 carries the S-palmitoyl cysteine lipid modification. Phosphoserine is present on residues serine 1444 and serine 1456. The segment at 1452-1480 (HRNSSKCKSKPQIAALKEETEEEVQDTRL) is disordered. Acidic residues predominate over residues 1470–1480 (ETEEEVQDTRL). The PDZ-binding signature appears at 1478–1480 (TRL).

This sequence belongs to the ABC transporter superfamily. ABCC family. CFTR transporter (TC 3.A.1.202) subfamily. As to quaternary structure, monomer; does not require oligomerization for channel activity. May form oligomers in the membrane. Interacts with SLC26A3, SLC26A6 and SHANK2. Interacts with NHERF1 and MYO6. Interacts (via C-terminus) with GOPC (via PDZ domain); this promotes CFTR internalization and thereby decreases channel activity. Interacts with SLC4A7 through NHERF1. Found in a complex with MYO5B and RAB11A. Interacts with ANO1. Interacts with SLC26A8. Interacts with AHCYL1; the interaction increases CFTR activity. Interacts with CSE1L. The core-glycosylated form interacts with GORASP2 (via PDZ GRASP-type 1 domain) in respone to ER stress. Interacts with MARCHF2; the interaction leads to CFTR ubiqtuitination and degradation. Interacts with ADGRG2. Post-translationally, N-glycosylated. Phosphorylated; cAMP treatment promotes phosphorylation and activates the channel. Dephosphorylation decreases the ATPase activity (in vitro). Phosphorylation at PKA sites activates the channel. Phosphorylation at PKC sites enhances the response to phosphorylation by PKA. Phosphorylated by AMPK; this inhibits channel activity. In terms of processing, ubiquitinated, leading to its degradation in the lysosome. Deubiquitination by USP10 in early endosomes enhances its endocytic recycling to the cell membrane. Ubiquitinated by RNF185 during ER stress. Ubiquitinated by MARCHF2. As to expression, expressed in the respiratory airway, including bronchial epithelium, and in the female reproductive tract, including oviduct (at protein level). Detected in pancreatic intercalated ducts in the exocrine tissue, on epithelial cells in intralobular striated ducts in sublingual salivary glands, on apical membranes of crypt cells throughout the small and large intestine, and on the reabsorptive duct in eccrine sweat glands. Detected on the equatorial segment of the sperm head (at protein level). Detected in nasal and bronchial superficial epithelium. Expressed by the central cells on the sebaceous glands, dermal adipocytes and, at lower levels, by epithelial cells.

Its subcellular location is the apical cell membrane. It is found in the early endosome membrane. It localises to the cell membrane. The protein resides in the recycling endosome membrane. The protein localises to the endoplasmic reticulum membrane. Its subcellular location is the nucleus. It catalyses the reaction ATP + H2O + closed Cl(-) channel = ADP + phosphate + open Cl(-) channel.. The enzyme catalyses chloride(in) = chloride(out). It carries out the reaction hydrogencarbonate(in) = hydrogencarbonate(out). The catalysed reaction is ATP + H2O = ADP + phosphate + H(+). Functionally, epithelial ion channel that plays an important role in the regulation of epithelial ion and water transport and fluid homeostasis. Mediates the transport of chloride ions across the cell membrane. Possesses an intrinsic ATPase activity and utilizes ATP to gate its channel; the passive flow of anions through the channel is gated by cycles of ATP binding and hydrolysis by the ATP-binding domains. The ion channel is also permeable to HCO(3)(-); selectivity depends on the extracellular chloride concentration. In vitro, mediates ATP-dependent glutathione flux. Exerts its function also by modulating the activity of other ion channels and transporters. Plays an important role in airway fluid homeostasis. Contributes to the regulation of the pH and the ion content of the airway surface fluid layer and thereby plays an important role in defense against pathogens. Modulates the activity of the epithelial sodium channel (ENaC) complex, in part by regulating the cell surface expression of the ENaC complex. Inhibits the activity of the ENaC channel containing subunits SCNN1A, SCNN1B and SCNN1G. Inhibits the activity of the ENaC channel containing subunits SCNN1D, SCNN1B and SCNN1G, but not of the ENaC channel containing subunits SCNN1A, SCNN1B and SCNN1G. May regulate bicarbonate secretion and salvage in epithelial cells by regulating the transporter SLC4A7. Can inhibit the chloride channel activity of ANO1. Plays a role in the chloride and bicarbonate homeostasis during sperm epididymal maturation and capacitation. This Homo sapiens (Human) protein is Cystic fibrosis transmembrane conductance regulator.